Here is a 236-residue protein sequence, read N- to C-terminus: Probable pseudouridine-5'-phosphatase YKL033W-A (236 aa).

The protein belongs to the HAD-like hydrolase superfamily.

The catalysed reaction is XMP + H2O = xanthosine + phosphate. The enzyme catalyses psi-UMP + H2O = pseudouridine + phosphate. Its function is as follows. Nucleotidase with XMP as the best in vitro substrate. Low catalytic efficiencies of YKL033W-A observed with XMP and other substrates suggest that these could be secondary activities for this protein, and its primary substrate is not yet identified. May possess pseudouridine 5'-phosphatase activity and together with dTTP/UTP pyrophosphatase YOR111W might constitute a pathway for the detoxification of pseudouridine 5'-triphosphate (Psi-UTP) and -monophosphate (Psi-UMP). The chain is Probable pseudouridine-5'-phosphatase YKL033W-A from Saccharomyces cerevisiae (strain ATCC 204508 / S288c) (Baker's yeast).